We begin with the raw amino-acid sequence, 340 residues long: DNA-directed RNA polymerase subunit alpha (340 aa).

Residues 1 to 235 are alpha N-terminal domain (alpha-NTD); it reads MYRNWTELIK…DQLNPFINFD (235 aa). An alpha C-terminal domain (alpha-CTD) region spans residues 251–340; that stretch reads WNPNLFRKVD…LSKQFEEENF (90 aa).

Belongs to the RNA polymerase alpha chain family. As to quaternary structure, homodimer. The RNAP catalytic core consists of 2 alpha, 1 beta, 1 beta' and 1 omega subunit. When a sigma factor is associated with the core the holoenzyme is formed, which can initiate transcription.

The catalysed reaction is RNA(n) + a ribonucleoside 5'-triphosphate = RNA(n+1) + diphosphate. DNA-dependent RNA polymerase catalyzes the transcription of DNA into RNA using the four ribonucleoside triphosphates as substrates. The protein is DNA-directed RNA polymerase subunit alpha of Magnetococcus marinus (strain ATCC BAA-1437 / JCM 17883 / MC-1).